A 238-amino-acid chain; its full sequence is Fatty acid metabolism regulator protein (238 aa).

Positions 6 to 74 (KGPASFAEKY…HGKPTRVNNF (69 aa)) constitute an HTH gntR-type domain. A DNA-binding region (H-T-H motif) is located at residues 34–53 (ERELSELIGVTRTTLREVLQ).

In terms of assembly, homodimer.

It is found in the cytoplasm. Multifunctional regulator of fatty acid metabolism. This Shewanella putrefaciens (strain CN-32 / ATCC BAA-453) protein is Fatty acid metabolism regulator protein.